Reading from the N-terminus, the 480-residue chain is ATP synthase subunit beta (480 aa).

Residue 152–159 (GGAGVGKT) participates in ATP binding.

This sequence belongs to the ATPase alpha/beta chains family. F-type ATPases have 2 components, CF(1) - the catalytic core - and CF(0) - the membrane proton channel. CF(1) has five subunits: alpha(3), beta(3), gamma(1), delta(1), epsilon(1). CF(0) has three main subunits: a(1), b(2) and c(9-12). The alpha and beta chains form an alternating ring which encloses part of the gamma chain. CF(1) is attached to CF(0) by a central stalk formed by the gamma and epsilon chains, while a peripheral stalk is formed by the delta and b chains.

The protein resides in the cell membrane. The enzyme catalyses ATP + H2O + 4 H(+)(in) = ADP + phosphate + 5 H(+)(out). In terms of biological role, produces ATP from ADP in the presence of a proton gradient across the membrane. The catalytic sites are hosted primarily by the beta subunits. The polypeptide is ATP synthase subunit beta (Wolbachia sp. subsp. Brugia malayi (strain TRS)).